The chain runs to 452 residues: Cobyrinate a,c-diamide synthase (452 aa).

Residues 244 to 437 enclose the GATase cobBQ-type domain; sequence KIAYAYDEAF…VHINLYTYKE (194 aa). Cys327 acts as the Nucleophile in catalysis.

This sequence belongs to the CobB/CbiA family. Mg(2+) is required as a cofactor.

It catalyses the reaction cob(II)yrinate + 2 L-glutamine + 2 ATP + 2 H2O = cob(II)yrinate a,c diamide + 2 L-glutamate + 2 ADP + 2 phosphate + 2 H(+). It functions in the pathway cofactor biosynthesis; adenosylcobalamin biosynthesis; cob(II)yrinate a,c-diamide from sirohydrochlorin (anaerobic route): step 10/10. Its function is as follows. Catalyzes the ATP-dependent amidation of the two carboxylate groups at positions a and c of cobyrinate, using either L-glutamine or ammonia as the nitrogen source. The protein is Cobyrinate a,c-diamide synthase of Caldanaerobacter subterraneus subsp. tengcongensis (strain DSM 15242 / JCM 11007 / NBRC 100824 / MB4) (Thermoanaerobacter tengcongensis).